The chain runs to 1359 residues: DNA-directed RNA polymerase subunit beta (1359 aa).

The protein belongs to the RNA polymerase beta chain family. As to quaternary structure, the RNAP catalytic core consists of 2 alpha, 1 beta, 1 beta' and 1 omega subunit. When a sigma factor is associated with the core the holoenzyme is formed, which can initiate transcription.

It carries out the reaction RNA(n) + a ribonucleoside 5'-triphosphate = RNA(n+1) + diphosphate. Functionally, DNA-dependent RNA polymerase catalyzes the transcription of DNA into RNA using the four ribonucleoside triphosphates as substrates. The polypeptide is DNA-directed RNA polymerase subunit beta (Nitrosococcus oceani (strain ATCC 19707 / BCRC 17464 / JCM 30415 / NCIMB 11848 / C-107)).